A 421-amino-acid polypeptide reads, in one-letter code: Histidine--tRNA ligase (421 aa).

The protein belongs to the class-II aminoacyl-tRNA synthetase family. Homodimer.

The protein resides in the cytoplasm. It catalyses the reaction tRNA(His) + L-histidine + ATP = L-histidyl-tRNA(His) + AMP + diphosphate + H(+). The chain is Histidine--tRNA ligase from Caldicellulosiruptor bescii (strain ATCC BAA-1888 / DSM 6725 / KCTC 15123 / Z-1320) (Anaerocellum thermophilum).